Reading from the N-terminus, the 365-residue chain is DNA replication and repair protein RecF (365 aa).

30–37 (GLNAQGKT) provides a ligand contact to ATP.

This sequence belongs to the RecF family.

It is found in the cytoplasm. Its function is as follows. The RecF protein is involved in DNA metabolism; it is required for DNA replication and normal SOS inducibility. RecF binds preferentially to single-stranded, linear DNA. It also seems to bind ATP. The protein is DNA replication and repair protein RecF of Chlamydia trachomatis serovar L2b (strain UCH-1/proctitis).